The chain runs to 367 residues: tRNA-specific 2-thiouridylase MnmA (367 aa).

Residues 9–16 and Phe35 each bind ATP; that span reads LMSGGVDS. Cys107 (nucleophile) is an active-site residue. Cys107 and Cys205 form a disulfide bridge. Gly131 lines the ATP pocket. The segment at 155 to 157 is interaction with tRNA; sequence KDQ. Cys205 acts as the Cysteine persulfide intermediate in catalysis.

The protein belongs to the MnmA/TRMU family.

It is found in the cytoplasm. It carries out the reaction S-sulfanyl-L-cysteinyl-[protein] + uridine(34) in tRNA + AH2 + ATP = 2-thiouridine(34) in tRNA + L-cysteinyl-[protein] + A + AMP + diphosphate + H(+). Its function is as follows. Catalyzes the 2-thiolation of uridine at the wobble position (U34) of tRNA, leading to the formation of s(2)U34. In Petrotoga mobilis (strain DSM 10674 / SJ95), this protein is tRNA-specific 2-thiouridylase MnmA.